The chain runs to 211 residues: Uracil phosphoribosyltransferase (211 aa).

5-phospho-alpha-D-ribose 1-diphosphate is bound by residues Arg79, Arg104, and 131 to 139 (DPMLATGGS). Uracil contacts are provided by residues Ile196 and 201–203 (GDA). Asp202 is a 5-phospho-alpha-D-ribose 1-diphosphate binding site.

Belongs to the UPRTase family. Mg(2+) serves as cofactor.

It carries out the reaction UMP + diphosphate = 5-phospho-alpha-D-ribose 1-diphosphate + uracil. It participates in pyrimidine metabolism; UMP biosynthesis via salvage pathway; UMP from uracil: step 1/1. Its activity is regulated as follows. Allosterically activated by GTP. Catalyzes the conversion of uracil and 5-phospho-alpha-D-ribose 1-diphosphate (PRPP) to UMP and diphosphate. The sequence is that of Uracil phosphoribosyltransferase from Lactococcus lactis subsp. lactis (strain IL1403) (Streptococcus lactis).